We begin with the raw amino-acid sequence, 64 residues long: Large ribosomal subunit protein bL35 (64 aa).

Disordered stretches follow at residues 1–20 (MPKAKTHSGASKRFRRTGTG) and 37–64 (PTKRTRRLAGRTQVSANDAPRINKMLNG).

This sequence belongs to the bacterial ribosomal protein bL35 family.

The protein is Large ribosomal subunit protein bL35 of Mycobacterium sp. (strain JLS).